Here is a 346-residue protein sequence, read N- to C-terminus: Holliday junction branch migration complex subunit RuvB (346 aa).

The interval 1 to 182 is large ATPase domain (RuvB-L); the sequence is MSEPARLISP…FGIPVRLTFY (182 aa). Residues leucine 21, arginine 22, glycine 63, lysine 66, threonine 67, threonine 68, 129–131, arginine 172, tyrosine 182, and arginine 219 each bind ATP; that span reads EDY. Threonine 67 is a binding site for Mg(2+). The tract at residues 183-253 is small ATPAse domain (RuvB-S); it reads TVEELELIVR…IADEALTRLL (71 aa). A head domain (RuvB-H) region spans residues 256–346; sequence NVGFDQLDKR…AQFRLFQEDD (91 aa). DNA contacts are provided by arginine 292, arginine 311, and arginine 316.

Belongs to the RuvB family. As to quaternary structure, homohexamer. Forms an RuvA(8)-RuvB(12)-Holliday junction (HJ) complex. HJ DNA is sandwiched between 2 RuvA tetramers; dsDNA enters through RuvA and exits via RuvB. An RuvB hexamer assembles on each DNA strand where it exits the tetramer. Each RuvB hexamer is contacted by two RuvA subunits (via domain III) on 2 adjacent RuvB subunits; this complex drives branch migration. In the full resolvosome a probable DNA-RuvA(4)-RuvB(12)-RuvC(2) complex forms which resolves the HJ.

The protein localises to the cytoplasm. The enzyme catalyses ATP + H2O = ADP + phosphate + H(+). The RuvA-RuvB-RuvC complex processes Holliday junction (HJ) DNA during genetic recombination and DNA repair, while the RuvA-RuvB complex plays an important role in the rescue of blocked DNA replication forks via replication fork reversal (RFR). RuvA specifically binds to HJ cruciform DNA, conferring on it an open structure. The RuvB hexamer acts as an ATP-dependent pump, pulling dsDNA into and through the RuvAB complex. RuvB forms 2 homohexamers on either side of HJ DNA bound by 1 or 2 RuvA tetramers; 4 subunits per hexamer contact DNA at a time. Coordinated motions by a converter formed by DNA-disengaged RuvB subunits stimulates ATP hydrolysis and nucleotide exchange. Immobilization of the converter enables RuvB to convert the ATP-contained energy into a lever motion, pulling 2 nucleotides of DNA out of the RuvA tetramer per ATP hydrolyzed, thus driving DNA branch migration. The RuvB motors rotate together with the DNA substrate, which together with the progressing nucleotide cycle form the mechanistic basis for DNA recombination by continuous HJ branch migration. Branch migration allows RuvC to scan DNA until it finds its consensus sequence, where it cleaves and resolves cruciform DNA. The protein is Holliday junction branch migration complex subunit RuvB of Rhizobium etli (strain ATCC 51251 / DSM 11541 / JCM 21823 / NBRC 15573 / CFN 42).